The chain runs to 210 residues: Leucyl/phenylalanyl-tRNA--protein transferase (210 aa).

Belongs to the L/F-transferase family.

It is found in the cytoplasm. The enzyme catalyses N-terminal L-lysyl-[protein] + L-leucyl-tRNA(Leu) = N-terminal L-leucyl-L-lysyl-[protein] + tRNA(Leu) + H(+). It catalyses the reaction N-terminal L-arginyl-[protein] + L-leucyl-tRNA(Leu) = N-terminal L-leucyl-L-arginyl-[protein] + tRNA(Leu) + H(+). The catalysed reaction is L-phenylalanyl-tRNA(Phe) + an N-terminal L-alpha-aminoacyl-[protein] = an N-terminal L-phenylalanyl-L-alpha-aminoacyl-[protein] + tRNA(Phe). Functionally, functions in the N-end rule pathway of protein degradation where it conjugates Leu, Phe and, less efficiently, Met from aminoacyl-tRNAs to the N-termini of proteins containing an N-terminal arginine or lysine. The protein is Leucyl/phenylalanyl-tRNA--protein transferase of Ruegeria sp. (strain TM1040) (Silicibacter sp.).